Consider the following 109-residue polypeptide: ATP-dependent Clp protease adapter protein ClpS (109 aa).

A disordered region spans residues 1-25; it reads MSERKEGDSGAGVRSAVITQTKPKT.

This sequence belongs to the ClpS family. Binds to the N-terminal domain of the chaperone ClpA.

Its function is as follows. Involved in the modulation of the specificity of the ClpAP-mediated ATP-dependent protein degradation. The chain is ATP-dependent Clp protease adapter protein ClpS from Phenylobacterium zucineum (strain HLK1).